We begin with the raw amino-acid sequence, 375 residues long: 23S rRNA (uracil(747)-C(5))-methyltransferase RlmC (375 aa).

Cysteine 3, cysteine 11, cysteine 14, and cysteine 87 together coordinate [4Fe-4S] cluster. The S-adenosyl-L-methionine site is built by glutamine 212, phenylalanine 241, glutamate 262, and asparagine 307. Catalysis depends on cysteine 334, which acts as the Nucleophile.

Belongs to the class I-like SAM-binding methyltransferase superfamily. RNA M5U methyltransferase family. RlmC subfamily.

It carries out the reaction uridine(747) in 23S rRNA + S-adenosyl-L-methionine = 5-methyluridine(747) in 23S rRNA + S-adenosyl-L-homocysteine + H(+). Its function is as follows. Catalyzes the formation of 5-methyl-uridine at position 747 (m5U747) in 23S rRNA. This Salmonella paratyphi A (strain ATCC 9150 / SARB42) protein is 23S rRNA (uracil(747)-C(5))-methyltransferase RlmC.